Here is an 89-residue protein sequence, read N- to C-terminus: Large ribosomal subunit protein bL27 (89 aa).

A disordered region spans residues 1–23; the sequence is MAHKKAGGSSRNGRDSESKRLGV.

This sequence belongs to the bacterial ribosomal protein bL27 family.

This Rhizobium meliloti (strain 1021) (Ensifer meliloti) protein is Large ribosomal subunit protein bL27.